We begin with the raw amino-acid sequence, 256 residues long: Imidazole glycerol phosphate synthase subunit HisF (256 aa).

Residues Asp-12 and Asp-131 contribute to the active site.

The protein belongs to the HisA/HisF family. Heterodimer of HisH and HisF.

The protein resides in the cytoplasm. The enzyme catalyses 5-[(5-phospho-1-deoxy-D-ribulos-1-ylimino)methylamino]-1-(5-phospho-beta-D-ribosyl)imidazole-4-carboxamide + L-glutamine = D-erythro-1-(imidazol-4-yl)glycerol 3-phosphate + 5-amino-1-(5-phospho-beta-D-ribosyl)imidazole-4-carboxamide + L-glutamate + H(+). The protein operates within amino-acid biosynthesis; L-histidine biosynthesis; L-histidine from 5-phospho-alpha-D-ribose 1-diphosphate: step 5/9. In terms of biological role, IGPS catalyzes the conversion of PRFAR and glutamine to IGP, AICAR and glutamate. The HisF subunit catalyzes the cyclization activity that produces IGP and AICAR from PRFAR using the ammonia provided by the HisH subunit. This Renibacterium salmoninarum (strain ATCC 33209 / DSM 20767 / JCM 11484 / NBRC 15589 / NCIMB 2235) protein is Imidazole glycerol phosphate synthase subunit HisF.